We begin with the raw amino-acid sequence, 343 residues long: GDSL esterase/lipase EXL6 (343 aa).

An N-terminal signal peptide occupies residues 1 to 21; sequence MFRGKIFVLSLFSIYVLSSAA. N-linked (GlcNAc...) asparagine glycosylation is present at asparagine 24. The Nucleophile role is filled by serine 36. Catalysis depends on residues aspartate 318 and histidine 321.

It belongs to the 'GDSL' lipolytic enzyme family. As to expression, flower buds and pollen.

The protein resides in the secreted. It is found in the extracellular space. Its subcellular location is the extracellular matrix. The protein localises to the pollen coat. Required for the formation of pollen coats and male fertility. The sequence is that of GDSL esterase/lipase EXL6 (EXL6) from Arabidopsis thaliana (Mouse-ear cress).